Consider the following 549-residue polypeptide: Acetyl-coenzyme A transporter 1 (549 aa).

Residues 1–12 are compositionally biased toward basic and acidic residues; sequence MSPTISHKDSSR. Residues 1 to 46 are disordered; it reads MSPTISHKDSSRQRRPGNFSHSLDMKSGPLPPGGWDDSHLDSAGRE. Topologically, residues 1 to 74 are cytoplasmic; sequence MSPTISHKDS…PQSFRAELSS (74 aa). Phosphoserine occurs at positions 22 and 42. Positions 36 to 46 are enriched in basic and acidic residues; the sequence is DDSHLDSAGRE. Residues 75 to 95 traverse the membrane as a helical segment; it reads ILLLLFLYVLQGIPLGLAGSI. Residues 96–113 lie on the Extracellular side of the membrane; sequence PLILQSKNVSYTDQAFFS. A glycan (N-linked (GlcNAc...) asparagine) is linked at Asn-103. Residues 114–134 form a helical membrane-spanning segment; the sequence is FVFWPFSLKLLWAPLVDAVYV. Topologically, residues 135–141 are cytoplasmic; the sequence is KNFGRRK. A helical membrane pass occupies residues 142-162; sequence SWLVPTQYILGLFMIYLSTQV. The Extracellular segment spans residues 163 to 175; that stretch reads DRLLGNTDDRTPD. Residues 176 to 196 traverse the membrane as a helical segment; sequence VIALTVAFFLFEFLAATQDIA. Over 197–217 the chain is Cytoplasmic; that stretch reads VDGWALTMLSRENVGYASTCN. The helical transmembrane segment at 218–238 threads the bilayer; it reads SVGQTAGYFLGNVLFLALESA. The Extracellular portion of the chain corresponds to 239-256; it reads DFCNKYLRFQPQPRGIVT. Residues 257–277 traverse the membrane as a helical segment; that stretch reads LSDFLFFWGTVFLITTTLVAL. Residues 278–299 are Cytoplasmic-facing; that stretch reads LKKENEVSVVKEETQGITDTYK. A helical membrane pass occupies residues 300–320; that stretch reads LLFAIIKMPAVLTFCLLILTA. Residues 321–343 lie on the Extracellular side of the membrane; that stretch reads KIGFSAADAVTGLKLVEEGVPKE. The helical transmembrane segment at 344–364 threads the bilayer; the sequence is HLALLAVPMVPLQIILPLIIS. Topologically, residues 365-378 are cytoplasmic; that stretch reads KYTAGPQPLNTFYK. A helical transmembrane segment spans residues 379–398; it reads AMPYRLLLGLEYALLVWWTP. At 399-404 the chain is on the extracellular side; the sequence is KVEHQG. The helical transmembrane segment at 405 to 425 threads the bilayer; it reads GFPIYYYIVVLLSYALHQVTV. The Cytoplasmic segment spans residues 426-508; that stretch reads YSMYVSIMAF…LGGSCVTALD (83 aa). The chain crosses the membrane as a helical span at residues 509 to 529; it reads GYYVESIICVFIGFGWWFFLG. Topologically, residues 530–549 are extracellular; that stretch reads PKFKKLQDEGSSSWKCKRNN.

The protein belongs to the SLC33A transporter family. Homodimerizes. Ubiquitous. Detected in heart, brain, placenta, lung, liver, skeletal muscle, kidney and pancreas. With strongest signals in pancreas.

It is found in the endoplasmic reticulum membrane. It carries out the reaction acetyl-CoA(in) = acetyl-CoA(out). Functionally, acetyl-CoA transporter that mediates active acetyl-CoA import through the endoplasmic reticulum (ER) membrane into the ER lumen where specific ER-based acetyl-CoA:lysine acetyltransferases are responsible for the acetylation of ER-based protein substrates, such as BACE1. Necessary for O-acetylation of gangliosides. This Homo sapiens (Human) protein is Acetyl-coenzyme A transporter 1.